A 519-amino-acid polypeptide reads, in one-letter code: MTPANPTLSNEPQAPHAESDELLPEIFRQTVEHAPIAISITDLKANILYANRAFRTITGYGSEEVLGKNESILSNGTTPRLVYQALWGRLAQKKPWSGVLVNRRKDKTLYLAELTVAPVLNEAGETIYYLGMHRDTSELHELEQRVNNQRLMIEAVVNAAPAAMVVLDRQHRVMLSNPSFCRLARDLVEDGSSESLVALLRENLAAPFETLENQGSAFSGKEISFDLGGRSPRWLSCHGRAIHIENEQAHVFFAPTEERYLLLTINDISELRQKQQDSRLNALKALMAEEELLEGMRETFNAAIHRLQGPVNLISAAMRMLERRLGDKAGNDPVLSAMREASTAGMEALENLSGSIPVRMAESKMPVNLNQLIREVITLCTDQLLAQGIVVDWQPALRLPWVMGGESSQRSMIKHLVDNAIESMSQNQVSRRELFISTRVENHLVRMEITDSGPGIPPDLVLKVFEPFFSTKPPHRVGRGMGLPVVQEIVAKHAGMVHVDTDYREGCRIVVELPFSAST.

The PAS 1 domain maps to 23–93 (LPEIFRQTVE…QALWGRLAQK (71 aa)). Positions 94–148 (KPWSGVLVNRRKDKTLYLAELTVAPVLNEAGETIYYLGMHRDTSELHELEQRVNN) constitute a PAC domain. In terms of domain architecture, PAS 2 spans 151-217 (LMIEAVVNAA…FETLENQGSA (67 aa)). Positions 302 to 517 (AAIHRLQGPV…RIVVELPFSA (216 aa)) constitute a Histidine kinase domain. Histidine 305 is subject to Phosphohistidine; by autocatalysis.

The cofactor is FAD.

It carries out the reaction ATP + protein L-histidine = ADP + protein N-phospho-L-histidine.. Functionally, required for the inhibition of NifA activity in response to oxygen and low level of fixed nitrogen. The chain is Nitrogen fixation regulatory protein (nifL) from Azotobacter vinelandii.